We begin with the raw amino-acid sequence, 569 residues long: Dihydroxy-acid dehydratase (569 aa).

A [2Fe-2S] cluster-binding site is contributed by C61. D93 serves as a coordination point for Mg(2+). C134 serves as a coordination point for [2Fe-2S] cluster. 2 residues coordinate Mg(2+): D135 and K136. At K136 the chain carries N6-carboxylysine. Residue C211 coordinates [2Fe-2S] cluster. E462 lines the Mg(2+) pocket. The Proton acceptor role is filled by S488.

This sequence belongs to the IlvD/Edd family. In terms of assembly, homodimer. [2Fe-2S] cluster serves as cofactor. Mg(2+) is required as a cofactor.

It carries out the reaction (2R)-2,3-dihydroxy-3-methylbutanoate = 3-methyl-2-oxobutanoate + H2O. The catalysed reaction is (2R,3R)-2,3-dihydroxy-3-methylpentanoate = (S)-3-methyl-2-oxopentanoate + H2O. It functions in the pathway amino-acid biosynthesis; L-isoleucine biosynthesis; L-isoleucine from 2-oxobutanoate: step 3/4. It participates in amino-acid biosynthesis; L-valine biosynthesis; L-valine from pyruvate: step 3/4. In terms of biological role, functions in the biosynthesis of branched-chain amino acids. Catalyzes the dehydration of (2R,3R)-2,3-dihydroxy-3-methylpentanoate (2,3-dihydroxy-3-methylvalerate) into 2-oxo-3-methylpentanoate (2-oxo-3-methylvalerate) and of (2R)-2,3-dihydroxy-3-methylbutanoate (2,3-dihydroxyisovalerate) into 2-oxo-3-methylbutanoate (2-oxoisovalerate), the penultimate precursor to L-isoleucine and L-valine, respectively. This is Dihydroxy-acid dehydratase from Tropheryma whipplei (strain Twist) (Whipple's bacillus).